Consider the following 330-residue polypeptide: Mycothiol acetyltransferase (330 aa).

N-acetyltransferase domains follow at residues 5-142 (LVTD…MPLR) and 171-328 (VRLR…APRP). Residue Glu-36 participates in 1D-myo-inositol 2-(L-cysteinylamino)-2-deoxy-alpha-D-glucopyranoside binding. Residue 80–82 (VVV) participates in acetyl-CoA binding. A disordered region spans residues 142–161 (RDIAGDEPGGPWEAPELPEP). 1D-myo-inositol 2-(L-cysteinylamino)-2-deoxy-alpha-D-glucopyranoside contacts are provided by Glu-198, Lys-238, and Glu-254. Acetyl-CoA contacts are provided by residues 258 to 260 (VGV) and 265 to 271 (QGSGLGR). Tyr-292 lines the 1D-myo-inositol 2-(L-cysteinylamino)-2-deoxy-alpha-D-glucopyranoside pocket. 297-302 (NEAAVR) lines the acetyl-CoA pocket.

The protein belongs to the acetyltransferase family. MshD subfamily. As to quaternary structure, monomer.

The catalysed reaction is 1D-myo-inositol 2-(L-cysteinylamino)-2-deoxy-alpha-D-glucopyranoside + acetyl-CoA = mycothiol + CoA + H(+). Its function is as follows. Catalyzes the transfer of acetyl from acetyl-CoA to desacetylmycothiol (Cys-GlcN-Ins) to form mycothiol. The protein is Mycothiol acetyltransferase of Nocardiopsis dassonvillei (strain ATCC 23218 / DSM 43111 / CIP 107115 / JCM 7437 / KCTC 9190 / NBRC 14626 / NCTC 10488 / NRRL B-5397 / IMRU 509) (Actinomadura dassonvillei).